A 237-amino-acid polypeptide reads, in one-letter code: MDNGDWGYMMSDPVTLNVGGHLYTTSLTTLTRYPDSMLGAMFGGDFPTARDPQGNYFIDRDGPLFRYVLNFLRTSELTLPLDFKEFDLLRKEADFYQIEPLIQCLNDPRPLYPMDTFEEVVELSSTRKLSKYSNPVAVIITQLTITTKVHSLLEGISNYFTKWNKHMMDTRDCQVSFTFGPCDYHQEVSLRVHLMEYITKQGFTIRNTRVHHMSERANENTVEHNWTFCRLARKTDD.

Residues 1-104 form an interaction with ANK1 isoform Mu7 region; it reads MDNGDWGYMM…FYQIEPLIQC (104 aa). The tract at residues 10–110 is interaction with CUL3; it reads MSDPVTLNVG…LIQCLNDPRP (101 aa). The BTB domain occupies 12–81; sequence DPVTLNVGGH…LRTSELTLPL (70 aa). The interval 113 to 187 is interaction with USP21; sequence PMDTFEEVVE…TFGPCDYHQE (75 aa).

In terms of assembly, homopentamer. Interacts with KCTD11; KCTD6 and KCTD11 may associate in heteropentameric assemblies. Interacts (via BTB domain) with CUL3; initially a 4:4 stoichiometry has been reported, however, electron microscopy revealed pentameric states with a five-pointed pinwheel shape. The interaction with CUL3 is indicative for a participation in a BCR (BTB-CUL3-RBX1) E3 ubiquitin-protein ligase complex. Interacts with HDAC1; probably indirect as the interaction requires the presence of KCTD11. Interacts with USP21 (preferentially catalytic inactive form). Interacts with ANK1 isoform Mu7; detected in striated muscle. Interacts with USP11. As to expression, highly expressed in cerebellum and brain.

It is found in the cytoplasm. The protein resides in the myofibril. The protein localises to the sarcomere. It localises to the m line. It participates in protein modification; protein ubiquitination. Probable substrate-specific adapter of a BCR (BTB-CUL3-RBX1) E3 ubiquitin-protein ligase complex mediating the ubiquitination and subsequent proteasomal degradation of target proteins. Promotes the ubiquitination of HDAC1; the function seems to depend on KCTD11:KCTD6 oligomerization. Can function as antagonist of the Hedgehog pathway by affecting the nuclear transfer of transcription factor GLI1; the function probably occurs via HDAC1 down-regulation, keeping GLI1 acetylated and inactive. Inhibits cell growth and tumorigenicity of medulloblastoma (MDB). Involved in regulating protein levels of ANK1 isoform Mu7 probably implicating CUL3-dependent proteasomal degradation. The polypeptide is BTB/POZ domain-containing protein KCTD6 (Kctd6) (Mus musculus (Mouse)).